Reading from the N-terminus, the 232-residue chain is tRNA1(Val) (adenine(37)-N6)-methyltransferase (232 aa).

The protein belongs to the methyltransferase superfamily. tRNA (adenine-N(6)-)-methyltransferase family.

It is found in the cytoplasm. The catalysed reaction is adenosine(37) in tRNA1(Val) + S-adenosyl-L-methionine = N(6)-methyladenosine(37) in tRNA1(Val) + S-adenosyl-L-homocysteine + H(+). Its function is as follows. Specifically methylates the adenine in position 37 of tRNA(1)(Val) (anticodon cmo5UAC). This Haemophilus influenzae (strain PittGG) protein is tRNA1(Val) (adenine(37)-N6)-methyltransferase.